The following is a 211-amino-acid chain: MKLTLVQIFFMMLLLLLGLGVGLGVGLQMAAAVLEESDQLLDEFLSSDSQDKAEATKEGLASRSTETLLVSNKEVVQPEDTIISEDEVGGDRMLRAEVLLHSNKDYLRSDVMDRECNALMALKVKSKDHTCIPQYIFIHEELDAVKAVCKSPAVACDLKGGKCHKSPRPFDLTFCKLSKSGQVIPHCNYVTFILEKYILMSCSDMKVQITS.

The signal sequence occupies residues 1-24 (MKLTLVQIFFMMLLLLLGLGVGLG).

This sequence belongs to the pancreatic ribonuclease family. In terms of processing, the N-terminus is blocked. Glycosylated.

It is found in the secreted. Its function is as follows. Secreted proximal epididymal protein required for post-testicular sperm maturation and male fertility. May be involved in sperm adhesion to the egg zona pellucida. Does not have ribonuclease activity. In Bos taurus (Bovine), this protein is Inactive ribonuclease-like protein 10 (RNASE10).